We begin with the raw amino-acid sequence, 446 residues long: tRNA-2-methylthio-N(6)-dimethylallyladenosine synthase (446 aa).

The region spanning 5-121 (RRFYIQTFGC…LPSLIDDAAS (117 aa)) is the MTTase N-terminal domain. Positions 14, 50, 84, 157, 161, and 164 each coordinate [4Fe-4S] cluster. A Radical SAM core domain is found at 143-373 (REGRISAFIP…IDLQQEISAE (231 aa)). The 64-residue stretch at 376-439 (RRQVGTVAEV…SATLSGSREG (64 aa)) folds into the TRAM domain.

This sequence belongs to the methylthiotransferase family. MiaB subfamily. In terms of assembly, monomer. The cofactor is [4Fe-4S] cluster.

The protein localises to the cytoplasm. The catalysed reaction is N(6)-dimethylallyladenosine(37) in tRNA + (sulfur carrier)-SH + AH2 + 2 S-adenosyl-L-methionine = 2-methylsulfanyl-N(6)-dimethylallyladenosine(37) in tRNA + (sulfur carrier)-H + 5'-deoxyadenosine + L-methionine + A + S-adenosyl-L-homocysteine + 2 H(+). Catalyzes the methylthiolation of N6-(dimethylallyl)adenosine (i(6)A), leading to the formation of 2-methylthio-N6-(dimethylallyl)adenosine (ms(2)i(6)A) at position 37 in tRNAs that read codons beginning with uridine. In Chlorobium luteolum (strain DSM 273 / BCRC 81028 / 2530) (Pelodictyon luteolum), this protein is tRNA-2-methylthio-N(6)-dimethylallyladenosine synthase.